We begin with the raw amino-acid sequence, 408 residues long: Zinc finger protein 764 (408 aa).

Positions 26-97 (VSFADVAVYF…AAQDPEVAKC (72 aa)) constitute a KRAB domain. The interval 91-167 (DPEVAKCQTQ…GRPSLCAHPP (77 aa)) is disordered. C2H2-type zinc fingers lie at residues 175–197 (HGCYVCGKSFAWRSTLVEHVYSH), 203–225 (FHCTDCGKGFGHASSLSKHRAIH), 231–253 (HRCLECGRAFTQRSALTSHLRVH), 259–281 (YGCADCGRRFSQSSALYQHRRVH), 287–309 (FPCPDCGRAFAYPSDLRRHVRTH), 315–337 (YPCPDCGRCFRQSSEMAAHRRTH), and 343–365 (YPCPQCGRRFGQKSAVAKHQWVH).

It belongs to the krueppel C2H2-type zinc-finger protein family. In terms of assembly, interacts (via KRAB domain) with NR3C1/GR (via NR LBD domain); the interaction regulates transcription factor activity of NR3C1 by directing its actions toward certain biologic pathways.

Its subcellular location is the nucleus. Zinc finger protein that functions as a cofactor for steroid hormone receptors, such as NR3C1/GR. Directs NR3C1/GR transcriptional activity toward specific biologic pathways by changing NR3C1/GR binding and transcriptional activity on the glucocorticoid-responsive genes. The polypeptide is Zinc finger protein 764 (Homo sapiens (Human)).